The chain runs to 506 residues: Chromodomain Y-like protein 2 (506 aa).

The Chromo domain maps to 7-67; sequence YEVERIVDKR…LHMSKDKRIK (61 aa). The interval 64–177 is disordered; sequence KRIKSGKQSS…RHFGNGSHQP (114 aa). The span at 88-98 shows a compositional bias: basic and acidic residues; it reads KLSHRPSDPGK. The segment covering 101-120 has biased composition (basic residues); it reads GTSHKRKRINPPLAKPKKGY. Residues 133–143 are compositionally biased toward polar residues; sequence KTVSYRTTPSG.

In terms of assembly, interacts (via chromo domain) with histone H3K9me3. In terms of tissue distribution, ubiquitously expressed.

It localises to the nucleus. This Homo sapiens (Human) protein is Chromodomain Y-like protein 2 (CDYL2).